Reading from the N-terminus, the 277-residue chain is Thymidylate synthase (277 aa).

A dUMP-binding site is contributed by arginine 21. A (6R)-5,10-methylene-5,6,7,8-tetrahydrofolate-binding site is contributed by histidine 51. A dUMP-binding site is contributed by 126–127 (RR). Cysteine 159 serves as the catalytic Nucleophile. DUMP is bound by residues 179–182 (RSAD), asparagine 190, and 220–222 (HLY). Aspartate 182 is a (6R)-5,10-methylene-5,6,7,8-tetrahydrofolate binding site. Serine 276 provides a ligand contact to (6R)-5,10-methylene-5,6,7,8-tetrahydrofolate.

Belongs to the thymidylate synthase family. Bacterial-type ThyA subfamily. Homodimer.

It localises to the cytoplasm. The catalysed reaction is dUMP + (6R)-5,10-methylene-5,6,7,8-tetrahydrofolate = 7,8-dihydrofolate + dTMP. Its pathway is pyrimidine metabolism; dTTP biosynthesis. In terms of biological role, catalyzes the reductive methylation of 2'-deoxyuridine-5'-monophosphate (dUMP) to 2'-deoxythymidine-5'-monophosphate (dTMP) while utilizing 5,10-methylenetetrahydrofolate (mTHF) as the methyl donor and reductant in the reaction, yielding dihydrofolate (DHF) as a by-product. This enzymatic reaction provides an intracellular de novo source of dTMP, an essential precursor for DNA biosynthesis. The sequence is that of Thymidylate synthase from Saccharophagus degradans (strain 2-40 / ATCC 43961 / DSM 17024).